A 292-amino-acid polypeptide reads, in one-letter code: Probable porphobilinogen deaminase (292 aa).

Cys233 carries the S-(dipyrrolylmethanemethyl)cysteine modification.

The protein belongs to the HMBS family. Requires dipyrromethane as cofactor.

It carries out the reaction 4 porphobilinogen + H2O = hydroxymethylbilane + 4 NH4(+). The protein operates within porphyrin-containing compound metabolism; protoporphyrin-IX biosynthesis; coproporphyrinogen-III from 5-aminolevulinate: step 2/4. Its function is as follows. Tetrapolymerization of the monopyrrole PBG into the hydroxymethylbilane pre-uroporphyrinogen in several discrete steps. The chain is Probable porphobilinogen deaminase (hemC) from Methanocaldococcus jannaschii (strain ATCC 43067 / DSM 2661 / JAL-1 / JCM 10045 / NBRC 100440) (Methanococcus jannaschii).